Reading from the N-terminus, the 564-residue chain is Putative ABC transporter ATP-binding protein PBPRA2240 (564 aa).

2 consecutive ABC transporter domains span residues 3–244 (IEFS…GIRE) and 299–533 (LTVN…ANLT). ATP is bound by residues 37–44 (GPSGSGKS) and 332–339 (GKNGSGKS).

Belongs to the ABC transporter superfamily.

The protein localises to the cell inner membrane. Functionally, probably part of an ABC transporter complex. Responsible for energy coupling to the transport system. In Photobacterium profundum (strain SS9), this protein is Putative ABC transporter ATP-binding protein PBPRA2240.